Here is an 808-residue protein sequence, read N- to C-terminus: Transducin beta-like protein 3 (808 aa).

Ala-2 is modified (N-acetylalanine). 13 WD repeats span residues 64 to 105, 107 to 146, 149 to 190, 193 to 232, 245 to 284, 290 to 329, 332 to 372, 374 to 413, 419 to 459, 477 to 516, 519 to 560, 562 to 602, and 604 to 642; these read EDQE…RLWK, IHTAPVATMAFDPTSTLLATGGCDGAVRVWDIVRHYGTHH, GSPG…CLAV, AHYSAVTSLAFSADGHTMLSSGRDKICIIWDLQSCQATRT, LPEEPVSQLGVKSPGLYFLTAGDQGTLRVWEAASGQCVYT, GPGQELTHCTLAHTAGVVLTATADHNLLLYEARSLRLQKQ, GYSE…CQIL, GHTDIVLALDVFRKGWLFASCAKDQSVRIWRMNKAGQVMC, GHTH…LSKN, CHDKDINSVAIAPNDKLLATGSQDRTAKLWALPQCQLLGV, GHRR…KTFE, HDAS…RTLD, and HEDKVWGLHCSRLDDHALTGASDSRVILWKDVTEAEQAE. Phosphoserine is present on Ser-257. A Glycyl lysine isopeptide (Lys-Gly) (interchain with G-Cter in SUMO2) cross-link involves residue Lys-407.

As to quaternary structure, part of the small subunit (SSU) processome, composed of more than 70 proteins and the RNA chaperone small nucleolar RNA (snoRNA) U3.

The protein localises to the nucleus. It is found in the nucleolus. Part of the small subunit (SSU) processome, first precursor of the small eukaryotic ribosomal subunit. During the assembly of the SSU processome in the nucleolus, many ribosome biogenesis factors, an RNA chaperone and ribosomal proteins associate with the nascent pre-rRNA and work in concert to generate RNA folding, modifications, rearrangements and cleavage as well as targeted degradation of pre-ribosomal RNA by the RNA exosome. This is Transducin beta-like protein 3 from Homo sapiens (Human).